The following is a 588-amino-acid chain: MNNSINHKFHHISRAEYQELLAVSRGDAVADYLIDNVSILDLINGGEISGPIVIKGRYIAGVGAEYADAPALQRIDARGATAVPGFIDAHLHIESSMMTPVTFETATLPRGLTTVICDPHEIVNVMGEAGFAWFARCAEQARQNQYLQVSSCVPALEGCDVNGASFTLEQMLAWRDHPQVTGLAEMMDYPGVISGQNALLDKLDAFRHLTLDGHCPGLGGKELNAYITAGIENCHESYQLEEGRRKLQLGMSLMIREGSAARNLNALAPLINEFNSPQCMLCTDDRNPWEIAHEGHIDALIRRLIEQHNVPLHVAYRVASWSTARHFGLNHLGLLAPGKQADIVLLSDARKVTVQQVLVKGEPIDAQTLQAEESARLAQSAPPYGNTIARQPVSASDFALQFTPGKRYRVIDVIHNELITHSHSSVYSENGFDRDDVSFIAVLERYGQRLAPACGLLGGFGLNEGALAATVSHDSHNIVVIGRSAEEMALAVNQVIQDGGGLCVVRNGQVQSHLPLPIAGLMSTDTAQSLAEQIDALKAAARECGPLPDEPFIQMAFLSLPVIPALKLTSQGLFDGEKFAFTTLEVTE.

This sequence belongs to the metallo-dependent hydrolases superfamily. Adenine deaminase family. In terms of assembly, homodimer. Mn(2+) is required as a cofactor.

The catalysed reaction is adenine + H2O + H(+) = hypoxanthine + NH4(+). This chain is Adenine deaminase, found in Escherichia coli O9:H4 (strain HS).